The chain runs to 227 residues: Hydroxylase/desaturase asaB (227 aa).

Belongs to the asaB hydroxylase/desaturase family.

The protein operates within secondary metabolite biosynthesis. Hydroxylase/desaturase; part of the gene cluster that mediates the biosynthesis of aspergillic acid, a hydroxamic acid-containing pyrazinone with aliphatic side chains that originates from leucine (Leu) and isoleucine (Ile). Aspergillic acid has antibiotic properties and was shown to be lethal to mice. The first step in the pathway is the production of deoxyaspergillic acid via a condensation between the Ile amine and the Leu carboxylic acid, followed by a reductive release from the protein forming the dipeptide aldehyde NH(2)-Leu-Ile-CHO, which could undergo an intermolecular cyclization resulting in a dihydropyrazinone. As the NRPS asaC lacks a condensation domain, it is improbable that it is responsible for condensation of Leu and Ile. One possibility is that asaC acts on a previously condensed dipeptide and functions as a Leu-Ile reductase to yield deoxyaspergillic acid. After asaC forms deoxyaspergillic acid, the cytochrome P450 asaD oxidizes the pyrazinone to the hydroxamic acid-containing bioactive metabolite aspergillic acid. The hydroxylase/desaturase asaB can then convert aspergillic acid to hydroxyaspergillic acid. Both aspergillic acid and hydroxyaspergillic acid can form complexes with iron producing ferriaspergillin analogs. The polypeptide is Hydroxylase/desaturase asaB (Aspergillus flavus (strain ATCC 200026 / FGSC A1120 / IAM 13836 / NRRL 3357 / JCM 12722 / SRRC 167)).